The following is a 483-amino-acid chain: Galactose-3-O-sulfotransferase 4 (483 aa).

The Cytoplasmic segment spans residues 1–18; the sequence is MGVLSPTRTMRLWGPRSL. Residues 19–39 traverse the membrane as a helical; Signal-anchor for type II membrane protein segment; the sequence is GVALGVFMTIGFALQLLGGPF. Topologically, residues 40–483 are lumenal; sequence QRRLPGLQLR…PLKTSRRPSP (444 aa). Positions 225-248 are disordered; the sequence is KRGNPHVSRDPNPPQLPSGAGPPA. N-linked (GlcNAc...) asparagine glycosylation is present at Asn-371.

It belongs to the galactose-3-O-sulfotransferase family. Mn(2+) is required as a cofactor.

The protein localises to the golgi apparatus. The protein resides in the golgi stack membrane. Its pathway is protein modification; carbohydrate sulfation. In terms of biological role, catalyzes the transfer of sulfate to beta-1,3-linked galactose residues in O-linked glycoproteins. Good substrates include asialofetuin, Gal-beta-1,3-GalNAc and Gal-beta-1,3 (GlcNAc-beta-1,6)GalNAc. The sequence is that of Galactose-3-O-sulfotransferase 4 (GAL3ST4) from Bos taurus (Bovine).